A 430-amino-acid chain; its full sequence is GTPase Obg (430 aa).

The region spanning 1-158 (MFVDQVKINV…IELQLELKVL (158 aa)) is the Obg domain. The segment at 122–143 (GGRGNMRFASPRNPAPEISENG) is disordered. In terms of domain architecture, OBG-type G spans 159–334 (ADVGLLGFPS…LVARTADVLE (176 aa)). Residues 165 to 172 (GFPSVGKS), 190 to 194 (FTTLV), 212 to 215 (DIPG), 282 to 285 (TKMD), and 315 to 317 (SSI) contribute to the GTP site. The Mg(2+) site is built by Ser-172 and Thr-192. In terms of domain architecture, OCT spans 353-430 (YEFSSEKDFT…ILDFVFEFVE (78 aa)).

It belongs to the TRAFAC class OBG-HflX-like GTPase superfamily. OBG GTPase family. In terms of assembly, monomer. Requires Mg(2+) as cofactor.

The protein localises to the cytoplasm. An essential GTPase which binds GTP, GDP and possibly (p)ppGpp with moderate affinity, with high nucleotide exchange rates and a fairly low GTP hydrolysis rate. Plays a role in control of the cell cycle, stress response, ribosome biogenesis and in those bacteria that undergo differentiation, in morphogenesis control. This chain is GTPase Obg, found in Pediococcus pentosaceus (strain ATCC 25745 / CCUG 21536 / LMG 10740 / 183-1w).